We begin with the raw amino-acid sequence, 255 residues long: Large ribosomal subunit protein uL4 (255 aa).

It belongs to the universal ribosomal protein uL4 family. In terms of assembly, part of the 50S ribosomal subunit.

Its function is as follows. One of the primary rRNA binding proteins, this protein initially binds near the 5'-end of the 23S rRNA. It is important during the early stages of 50S assembly. It makes multiple contacts with different domains of the 23S rRNA in the assembled 50S subunit and ribosome. Forms part of the polypeptide exit tunnel. In Pyrococcus horikoshii (strain ATCC 700860 / DSM 12428 / JCM 9974 / NBRC 100139 / OT-3), this protein is Large ribosomal subunit protein uL4.